The sequence spans 115 residues: Large ribosomal subunit protein bL20c (115 aa).

The protein belongs to the bacterial ribosomal protein bL20 family.

It is found in the plastid. The protein resides in the chloroplast. In terms of biological role, binds directly to 23S ribosomal RNA and is necessary for the in vitro assembly process of the 50S ribosomal subunit. It is not involved in the protein synthesizing functions of that subunit. The polypeptide is Large ribosomal subunit protein bL20c (Nymphaea alba (White water-lily)).